We begin with the raw amino-acid sequence, 92 residues long: Small ribosomal subunit protein bS20 (92 aa).

The tract at residues 1–20 (MANIASAKKRARQAENNRAH) is disordered.

The protein belongs to the bacterial ribosomal protein bS20 family.

Functionally, binds directly to 16S ribosomal RNA. This chain is Small ribosomal subunit protein bS20, found in Methylococcus capsulatus (strain ATCC 33009 / NCIMB 11132 / Bath).